We begin with the raw amino-acid sequence, 572 residues long: Formate--tetrahydrofolate ligase (572 aa).

Thr-81–Thr-88 is an ATP binding site.

Belongs to the formate--tetrahydrofolate ligase family.

The enzyme catalyses (6S)-5,6,7,8-tetrahydrofolate + formate + ATP = (6R)-10-formyltetrahydrofolate + ADP + phosphate. Its pathway is one-carbon metabolism; tetrahydrofolate interconversion. The polypeptide is Formate--tetrahydrofolate ligase (Granulibacter bethesdensis (strain ATCC BAA-1260 / CGDNIH1)).